A 420-amino-acid chain; its full sequence is Transmembrane protease serine 11B-like protein (420 aa).

At 1-19 (MTVSKLRPVIASRKSFPPW) the chain is on the cytoplasmic side. A helical; Signal-anchor for type II membrane protein membrane pass occupies residues 20–40 (MIILGVLGVLAILGLIIGLLV). Topologically, residues 41–420 (HFLAVENKIY…RDWIASKTGI (380 aa)) are extracellular. One can recognise an SEA domain in the interval 48 to 165 (KIYYYQGSFK…GSLKLTEITK (118 aa)). N-linked (GlcNAc...) asparagine glycans are attached at residues Asn-111 and Asn-146. The Peptidase S1 domain maps to 189–419 (ITGGSTAQKG…YRDWIASKTG (231 aa)). An intrachain disulfide couples Cys-214 to Cys-230. The active-site Charge relay system is the His-229. Asn-239 carries N-linked (GlcNAc...) asparagine glycosylation. The active-site Charge relay system is Asp-274. Intrachain disulfides connect Cys-339/Cys-355 and Cys-366/Cys-395. The Charge relay system role is filled by Ser-370.

It belongs to the peptidase S1 family.

The protein localises to the membrane. Its subcellular location is the cell membrane. Its activity is regulated as follows. Inhibited by aprotinin, leupeptin, benzamidine, SERPINA1, SPINT1 and SPINT2. In terms of biological role, serine protease. The chain is Transmembrane protease serine 11B-like protein (Tmprss11bnl) from Rattus norvegicus (Rat).